A 323-amino-acid polypeptide reads, in one-letter code: Galectin-4 (323 aa).

2 Galectin domains span residues 19–150 (YYKP…INFI) and 194–323 (YKTR…YVQI). A beta-D-galactoside is bound at residue 256-262 (WGAEERK).

As to quaternary structure, monomer.

In terms of biological role, galectin that binds lactose and a related range of sugars. May be involved in the assembly of adherens junctions. This Sus scrofa (Pig) protein is Galectin-4 (LGALS4).